Reading from the N-terminus, the 623-residue chain is Kelch-like protein diablo (623 aa).

The disordered stretch occupies residues 1 to 54 (MGDLPGSGSTAQPRDAAVTGTGGNSTAGGGSSVGSTAVDRPPSPARLSHTSEKH). At Thr19 the chain carries Phosphothreonine. Residues 20 to 32 (GTGGNSTAGGGSS) are compositionally biased toward gly residues. The BTB domain maps to 72–139 (CDVVLNVGGR…CYTAHIIVEE (68 aa)). One can recognise a BACK domain in the interval 174 to 276 (CLGIRAFADT…SPKFLVGTVG (103 aa)). 6 Kelch repeats span residues 323–369 (VLFA…VLND), 371–417 (LYAV…VLDE), 418–464 (FLYA…VLGG), 466–511 (LYAI…VFNN), 513–558 (IYAV…VVNG), and 559–605 (QLYA…VMRA).

The protein operates within protein modification; protein ubiquitination. Its function is as follows. Probable substrate-specific adapter of an E3 ubiquitin-protein ligase complex which mediates the ubiquitination and subsequent proteasomal degradation of target proteins. May have a role in synapse differentiation and growth. The protein is Kelch-like protein diablo of Drosophila simulans (Fruit fly).